Reading from the N-terminus, the 574-residue chain is Sulfate adenylyltransferase (574 aa).

The N-terminal stretch occupies residues 1-169 (MANSPHGGVL…IEAVNKLNHY (169 aa)). The segment at 170–394 (DYVALRYSPA…LRESSPPRAT (225 aa)) is catalytic. Residue Q197 coordinates sulfate. ATP-binding positions include 197–200 (QTRN) and 291–294 (GRDH). Catalysis depends on residues T198, R199, and N200. R199 contacts sulfate. Sulfate is bound at residue A295. V333 is an ATP binding site. The allosteric regulation domain; adenylyl-sulfate kinase-like stretch occupies residues 395–574 (QGFTIFLTGY…LESEGYFDRL (180 aa)). 3'-phosphoadenylyl sulfate contacts are provided by residues 434 to 437 (DTVR), R451, 477 to 478 (IA), and R516.

The protein in the N-terminal section; belongs to the sulfate adenylyltransferase family. It in the C-terminal section; belongs to the APS kinase family. As to quaternary structure, homohexamer. Dimer of trimers.

It localises to the cytoplasm. It catalyses the reaction sulfate + ATP + H(+) = adenosine 5'-phosphosulfate + diphosphate. The protein operates within sulfur metabolism; hydrogen sulfide biosynthesis; sulfite from sulfate: step 1/3. With respect to regulation, allosterically inhibited by 3'-phosphoadenosine 5'-phosphosulfate (PAPS). Functionally, catalyzes the first intracellular reaction of sulfate assimilation, forming adenosine-5'-phosphosulfate (APS) from inorganic sulfate and ATP. Plays an important role in sulfate activation as a component of the biosynthesis pathway of sulfur-containing amino acids. The polypeptide is Sulfate adenylyltransferase (Aspergillus terreus (strain NIH 2624 / FGSC A1156)).